The primary structure comprises 328 residues: tRNA uridine(34) hydroxylase (328 aa).

One can recognise a Rhodanese domain in the interval 130–224; sequence LDEDTIVLDT…YGKDPEVQGE (95 aa). The active-site Cysteine persulfide intermediate is Cys184.

The protein belongs to the TrhO family.

The catalysed reaction is uridine(34) in tRNA + AH2 + O2 = 5-hydroxyuridine(34) in tRNA + A + H2O. Catalyzes oxygen-dependent 5-hydroxyuridine (ho5U) modification at position 34 in tRNAs. This Streptococcus uberis (strain ATCC BAA-854 / 0140J) protein is tRNA uridine(34) hydroxylase.